We begin with the raw amino-acid sequence, 1347 residues long: G-protein coupled receptor-associated sorting protein 1 (1347 aa).

Disordered stretches follow at residues 1–75 (MTRA…AYAK), 145–174 (ESIP…SWYR), and 188–281 (DFKW…NSRS). Positions 21 to 33 (ENANAAEVEPEAP) are enriched in low complexity. The span at 211-226 (FRPRKSMKANNRFRHM) shows a compositional bias: basic residues. Basic and acidic residues predominate over residues 263–278 (PKDKTKVWSKPKEEPN). At Ser-295 the chain carries Phosphoserine. Disordered regions lie at residues 310-344 (GEEA…AMSG), 364-396 (FSKS…QEAR), and 460-485 (QVSS…SKSM). Residues 316-325 (RSKPRARKGV) are compositionally biased toward basic residues. Basic and acidic residues predominate over residues 370-396 (KKEPRTRAVPKEEVKTKARASTKQEAR). Residues 461 to 484 (VSSFCLGSGKKSSMESGPKATSKS) are compositionally biased toward polar residues. Residues Ser-619 and Ser-626 each carry the phosphoserine modification. The residue at position 860 (Thr-860) is a Phosphothreonine. At Ser-862 the chain carries Phosphoserine.

It belongs to the GPRASP family. Interacts with cytoplasmic tails of a variety of G-protein coupled receptors such as delta opioid receptor/OPRD1, beta-2 adrenergic receptor/ADRB2 and D4 dopamine receptor/DRD4 as well as D2 dopamine receptor/DRD2. Interacts with PER1. Interacts with BECN2; the interaction is direct. In terms of tissue distribution, expressed in the brain, with higher expression in the hippocampus, hypothalamus and olfactory bulb.

The protein localises to the cytoplasm. In terms of biological role, modulates lysosomal sorting and functional down-regulation of a variety of G-protein coupled receptors. Targets receptors for degradation in lysosomes via its interaction with BECN2. This is G-protein coupled receptor-associated sorting protein 1 (Gprasp1) from Mus musculus (Mouse).